A 217-amino-acid polypeptide reads, in one-letter code: Large ribosomal subunit protein uL1 (217 aa).

N-acetylserine is present on serine 2. Tyrosine 11 is subject to Phosphotyrosine. N6-acetyllysine is present on residues lysine 91 and lysine 106. Lysine 118 is modified (N6-acetyllysine; alternate). A Glycyl lysine isopeptide (Lys-Gly) (interchain with G-Cter in SUMO1); alternate cross-link involves residue lysine 118. Lysine 118 participates in a covalent cross-link: Glycyl lysine isopeptide (Lys-Gly) (interchain with G-Cter in SUMO2); alternate.

Belongs to the universal ribosomal protein uL1 family. In terms of assembly, component of the large ribosomal subunit.

The protein localises to the cytoplasm. Functionally, component of the large ribosomal subunit. The ribosome is a large ribonucleoprotein complex responsible for the synthesis of proteins in the cell. The sequence is that of Large ribosomal subunit protein uL1 (RPL10A) from Macaca fascicularis (Crab-eating macaque).